The primary structure comprises 1331 residues: Probable serine/threonine-protein kinase DDB_G0272254 (1331 aa).

3 stretches are compositionally biased toward low complexity: residues 1 to 42, 96 to 116, and 153 to 175; these read METS…NSSS, NDNN…NNNN, and TQQT…STPS. 3 disordered regions span residues 1 to 43, 92 to 132, and 150 to 175; these read METS…SSSA, DKIC…QQIS, and ILNT…STPS. Transmembrane regions (helical) follow at residues 201 to 221 and 224 to 244; these read FGFS…IYIL and FVLK…FVIY. Residues 259 to 287 are compositionally biased toward low complexity; sequence SINDSDSSSNNNNNNNNTTTTNNDSASTK. Disordered stretches follow at residues 259-300, 320-419, 435-464, and 512-581; these read SIND…PETY, NLNN…LSKE, SVGK…SHNI, and AHSN…VVGN. Polar residues predominate over residues 288–299; that stretch reads GNNNNEISSPET. The segment covering 436-450 has biased composition (polar residues); that stretch reads VGKTHNRSSSGSDSI. Positions 514–531 are enriched in low complexity; the sequence is SNNNNNNNNSNTNNNNNN. Positions 532–555 are enriched in polar residues; the sequence is QSVSAPVSQLATPVYQTPGTNSVV. Residues 557-577 show a composition bias toward low complexity; sequence NLENDNENNNDSFSDINDNNS. 6 Kelch repeats span residues 665-710, 716-769, 770-816, 822-868, 909-959, and 962-1008; these read SLVL…NHDY, KFYL…RYGN, RFLL…GHTS, KLII…ELND, NIVM…LIKN, and KLFI…NNNN. The span at 834 to 860 shows a compositional bias: low complexity; that stretch reads NNNNNNNNNNNNNNNNNNNNNNNNNNN. Residues 834-862 are disordered; sequence NNNNNNNNNNNNNNNNNNNNNNNNNNNKG. The interval 976–1042 is disordered; the sequence is NNNSSSGGNN…NNNNNNNNNN (67 aa). Residues 1073 to 1331 enclose the Protein kinase domain; sequence IKIDKEIGKG…EITNYLTKTF (259 aa). ATP is bound by residues 1079–1087 and Lys1100; that span reads IGKGHFSKV. Asp1200 serves as the catalytic Proton acceptor.

It belongs to the protein kinase superfamily. TKL Ser/Thr protein kinase family.

Its subcellular location is the membrane. The enzyme catalyses L-seryl-[protein] + ATP = O-phospho-L-seryl-[protein] + ADP + H(+). It carries out the reaction L-threonyl-[protein] + ATP = O-phospho-L-threonyl-[protein] + ADP + H(+). The polypeptide is Probable serine/threonine-protein kinase DDB_G0272254 (Dictyostelium discoideum (Social amoeba)).